We begin with the raw amino-acid sequence, 286 residues long: MVKCLLLSFLIIAIFIGVPTAKGDVNFDLSTATAKTYTKFIEDFRATLPFSHKVYDIPLLYSTISDSRRFILLNLTSYAYETISVAIDVTNVYVVAYRTRDVSYFFKESPPEAYNILFKGTRKITLPYTGNYENLQTAAHKIRENIDLGLPALSSAITTLFYYNAQSAPSALLVLIQTTAEAARFKYIERHVAKYVATNFKPNLAIISLENQWSALSKQIFLAQNQGGKFRNPVDLIKPTGERFQVTNVDSDVVKGNIKLLLNSRASTADENFITTMTLLGESVVN.

An N-terminal signal peptide occupies residues 1–23 (MVKCLLLSFLIIAIFIGVPTAKG). Residue asparagine 74 is glycosylated (N-linked (GlcNAc...) asparagine). Active-site residues include tyrosine 93, tyrosine 132, glutamate 181, and arginine 184.

The protein belongs to the ribosome-inactivating protein family. Type 1 RIP subfamily. In terms of processing, bound to a branched hexasaccharide.

The catalysed reaction is Endohydrolysis of the N-glycosidic bond at one specific adenosine on the 28S rRNA.. In terms of biological role, irreversibly relaxes supercoiled DNA and catalyzes double-stranded breakage. Also acts as a ribosome inactivating protein. In Momordica charantia (Bitter gourd), this protein is Ribosome-inactivating protein beta-momorcharin (MAP30).